The chain runs to 379 residues: Cytochrome b (379 aa).

Transmembrane regions (helical) follow at residues 34-54 (FGSL…LLAM), 78-99 (WLIR…YFHI), 114-134 (WNTG…GYVL), and 179-199 (FFAL…IHLT). Heme b-binding residues include histidine 84 and histidine 98. Residues histidine 183 and histidine 197 each contribute to the heme b site. Histidine 202 serves as a coordination point for a ubiquinone. 4 helical membrane-spanning segments follow: residues 227 to 247 (LKDI…TFFS), 289 to 309 (LGGV…PLLH), 321 to 341 (FSQV…WVGS), and 348 to 368 (FIAI…VLFP).

The protein belongs to the cytochrome b family. The cytochrome bc1 complex contains 11 subunits: 3 respiratory subunits (MT-CYB, CYC1 and UQCRFS1), 2 core proteins (UQCRC1 and UQCRC2) and 6 low-molecular weight proteins (UQCRH/QCR6, UQCRB/QCR7, UQCRQ/QCR8, UQCR10/QCR9, UQCR11/QCR10 and a cleavage product of UQCRFS1). This cytochrome bc1 complex then forms a dimer. Heme b is required as a cofactor.

It localises to the mitochondrion inner membrane. Component of the ubiquinol-cytochrome c reductase complex (complex III or cytochrome b-c1 complex) that is part of the mitochondrial respiratory chain. The b-c1 complex mediates electron transfer from ubiquinol to cytochrome c. Contributes to the generation of a proton gradient across the mitochondrial membrane that is then used for ATP synthesis. This Apteryx australis (Southern brown kiwi) protein is Cytochrome b (MT-CYB).